Reading from the N-terminus, the 343-residue chain is Phenylalanine--tRNA ligase alpha subunit (343 aa).

Position 264 (Glu264) interacts with Mg(2+).

Belongs to the class-II aminoacyl-tRNA synthetase family. Phe-tRNA synthetase alpha subunit type 1 subfamily. In terms of assembly, tetramer of two alpha and two beta subunits. Requires Mg(2+) as cofactor.

The protein resides in the cytoplasm. The enzyme catalyses tRNA(Phe) + L-phenylalanine + ATP = L-phenylalanyl-tRNA(Phe) + AMP + diphosphate + H(+). This chain is Phenylalanine--tRNA ligase alpha subunit, found in Azoarcus sp. (strain BH72).